We begin with the raw amino-acid sequence, 862 residues long: DNA replication licensing factor MCM4 (862 aa).

The segment covering 1 to 12 has biased composition (gly residues); sequence MASRGGGGGGDG. The tract at residues 1–132 is disordered; it reads MASRGGGGGG…GGGGGGAGAD (132 aa). Composition is skewed to low complexity over residues 20 to 41 and 52 to 64; these read SSPD…PQSG and SASP…SLGG. The C4-type zinc-finger motif lies at 289 to 317; that stretch reads CLVCGFYSEPVMVDRGRVTEPHICQKEQC. In terms of domain architecture, MCM spans 453–659; sequence IYDRLTRSLA…QTDRRLAKHI (207 aa). Residue 503-510 participates in ATP binding; the sequence is GDPGTSKS. Residues 635–638 carry the Arginine finger motif; the sequence is SRFD.

The protein belongs to the MCM family. As to quaternary structure, component of the minichromosome maintenance (MCM) complex, a heterotetramer composed of MCM2, MCM3, MCM4, MCM5, MCM6 and MCM7.

Its subcellular location is the nucleus. It carries out the reaction ATP + H2O = ADP + phosphate + H(+). In terms of biological role, probable component of the MCM2-7 complex (MCM complex) that may function as a DNA helicase and which is essential to undergo a single round of replication initiation and elongation per cell cycle in eukaryotic cells. This is DNA replication licensing factor MCM4 (MCM4) from Oryza sativa subsp. japonica (Rice).